Consider the following 404-residue polypeptide: Protrudin (404 aa).

The interval 1-20 (MQTSEREGCGPEVSPSTVPE) is disordered. The Cytoplasmic segment spans residues 1 to 66 (MQTSEREGCG…AGDGVRYLLR (66 aa)). Residues 1–92 (MQTSEREGCG…LFLTLNEGAW (92 aa)) form a sufficient for homooligomerization region. A sufficient for localization to endoplasmic reticulum tubular network and for interactions with REEP1, REEP5, ATL1, ATL2, ATL3 and SPAST region spans residues 1-205 (MQTSEREGCG…LYLLPLCWVL (205 aa)). A necessary for interaction with RAB11A and function in neurite outgrowth region spans residues 51-64 (LEPLKDAGDGVRYL). Residues 67 to 87 (WQTPLCSLLTCLGLNVLFLTL) traverse the membrane as a helical segment. Asparagine 88 is a topological domain (lumenal). A helical transmembrane segment spans residues 89–109 (EGAWYSVGALMISVPALLGYL). Residues 110–187 (QEGCQARLSE…NPAVSSQFYG (78 aa)) are Cytoplasmic-facing. An intramembrane region (helical) is located at residues 188–208 (ALLGTVCMLYLLPLCWVLALL). The Cytoplasmic portion of the chain corresponds to 209-404 (NSTLFLGNVE…CASCNQTLSK (196 aa)). The interval 234–286 (MNPKQEESAFESPPPSDAGGKGALVDCTPAPTPTEDLTPGSVEEAEEAEPDEE) is disordered. The necessary for interaction with KIF5A stretch occupies residues 271–354 (TPGSVEEAEE…GCSATFSVLK (84 aa)). The span at 276-286 (EEAEEAEPDEE) shows a compositional bias: acidic residues. The tract at residues 286-292 (EFKDAIE) is necessary for interaction with VAPA. Residues 337-403 (TNNYGSCTGC…VCASCNQTLS (67 aa)) form an FYVE-type zinc finger. Zn(2+) contacts are provided by cysteine 343, cysteine 346, cysteine 359, cysteine 362, cysteine 367, cysteine 370, cysteine 395, and cysteine 398.

As to quaternary structure, can form homooligomers (monomers, dimers and tetramers). Interacts with RAB11A (GDP-bound form); regulates RAB11A. Interacts with FKBP8; may negatively regulate ZFYVE27 phosphorylation. Interacts with VAPA (via MSP domain); may regulate ZFYVE27 retention in the endoplasmic reticulum and its function in cell projections formation. Interacts with VAPB (via MSP domain). Interacts with RAB11B (GDP-bound form), REEP1, REEP5, ATL1, ATL2, ATL3, SPAST, SURF4, KIF5A, KIF5B, KIF5C and RTN3. Phosphorylated. Phosphorylation is induced by NGF through the MAPK/ERK pathway and modulates interaction with RAB11A.

Its subcellular location is the recycling endosome membrane. The protein resides in the endoplasmic reticulum membrane. It is found in the cell projection. The protein localises to the growth cone membrane. Key regulator of RAB11-dependent vesicular trafficking during neurite extension through polarized membrane transport. Promotes axonal elongation and contributes to the establishment of neuronal cell polarity. Involved in nerve growth factor-induced neurite formation in VAPA-dependent manner. Contributes to both the formation and stabilization of the tubular ER network. Involved in ER morphogenesis by regulating the sheet-to-tubule balance and possibly the density of tubule interconnections. Acts as an adapter protein that facilitates the interaction of KIF5A with VAPA, VAPB, SURF4, RAB11A, RAB11B and RTN3 and the ZFYVE27-KIF5A complex contributes to the transport of these proteins in neurons. Can induce formation of neurite-like membrane protrusions in non-neuronal cells in a KIF5A/B-dependent manner. This Bos taurus (Bovine) protein is Protrudin (ZFYVE27).